Reading from the N-terminus, the 753-residue chain is MAP/microtubule affinity-regulating kinase 3 (753 aa).

A disordered region spans residues 1 to 36 (MSTRTPLPTVNERDTENHTSHGDGRQEVTSRTSRSG). Over residues 11-28 (NERDTENHTSHGDGRQEV) the composition is skewed to basic and acidic residues. S42 is modified (phosphoserine). One can recognise a Protein kinase domain in the interval 56–307 (YRLLKTIGKG…LEQIMKDRWI (252 aa)). Residues 62–70 (IGKGNFAKV) and K85 contribute to the ATP site. D178 (proton acceptor) is an active-site residue. Residue T211 is modified to Phosphothreonine; by LKB1. Residues 326-365 (ISDQKRIDIMVGMGYSQEEIQESLSKMKYDEITATYLLLG) form the UBA domain. Phosphoserine occurs at positions 368, 374, 376, 380, 383, 384, 400, 407, 419, and 469. The disordered stretch occupies residues 370-600 (ELDASDSSSS…TPLSQTRSRG (231 aa)). The segment covering 374 to 385 (SDSSSSSNLSLA) has biased composition (low complexity). The segment covering 391-400 (SDLNNSTGQS) has biased composition (polar residues). Composition is skewed to polar residues over residues 490-513 (STVPSSNTASGGMTRRNTYVCSER) and 521-548 (VIQNGKENSTIPDQRTPVASTHSISSAA). 2 positions are modified to phosphoserine: S540 and S543. T549 carries the phosphothreonine modification. Phosphothreonine; by PKC/PRKCZ is present on T564. A phosphoserine mark is found at S583, S598, S601, and S643. The span at 584–600 (PSLSHEATPLSQTRSRG) shows a compositional bias: polar residues. The disordered stretch occupies residues 632–655 (NGRYEGSSRNVSAEQKDENKEAKP). Over residues 645–655 (EQKDENKEAKP) the composition is skewed to basic and acidic residues. Residues 704 to 753 (DGHAENLVQWEMEVCKLPRLSLNGVRFKRISGTSIAFKNIASKIANELKL) enclose the KA1 domain.

It belongs to the protein kinase superfamily. CAMK Ser/Thr protein kinase family. SNF1 subfamily. As to quaternary structure, interacts with MAPT/TAU. Interacts with DLG5 (via coiled-coil domain). Interacts with STK3/MST2 and STK4/MST1 in the presence of DLG5. Interacts with YWHAB, YWHAG, YWHAQ and YWHAZ. Interacts with PKP2 (via N-terminus). Interacts with CDC25C. Interacts with KSR1. In terms of processing, phosphorylated at Thr-211 by STK11/LKB1 in complex with STE20-related adapter-alpha (STRADA) pseudo kinase and CAB39. Phosphorylation at Thr-564 by PRKCZ/aPKC inhibits the kinase activity. In terms of tissue distribution, ubiquitous.

It localises to the cell membrane. It is found in the cell projection. Its subcellular location is the dendrite. The protein localises to the cytoplasm. The catalysed reaction is L-seryl-[protein] + ATP = O-phospho-L-seryl-[protein] + ADP + H(+). It catalyses the reaction L-threonyl-[protein] + ATP = O-phospho-L-threonyl-[protein] + ADP + H(+). With respect to regulation, activated by phosphorylation on Thr-211. Inhibited by phosphorylation on Thr-564. Serine/threonine-protein kinase. Involved in the specific phosphorylation of microtubule-associated proteins for MAP2 and MAP4. Phosphorylates the microtubule-associated protein MAPT/TAU. Phosphorylates CDC25C on 'Ser-216'. Regulates localization and activity of some histone deacetylases by mediating phosphorylation of HDAC7, promoting subsequent interaction between HDAC7 and 14-3-3 and export from the nucleus. Regulates localization and activity of MITF by mediating its phosphorylation, promoting subsequent interaction between MITF and 14-3-3 and retention in the cytosol. Negatively regulates the Hippo signaling pathway and antagonizes the phosphorylation of LATS1. Cooperates with DLG5 to inhibit the kinase activity of STK3/MST2 toward LATS1. Phosphorylates PKP2 and KSR1. The protein is MAP/microtubule affinity-regulating kinase 3 (MARK3) of Homo sapiens (Human).